We begin with the raw amino-acid sequence, 186 residues long: Small ribosomal subunit protein uS7 (186 aa).

It belongs to the universal ribosomal protein uS7 family. In terms of assembly, part of the 30S ribosomal subunit.

In terms of biological role, one of the primary rRNA binding proteins, it binds directly to 16S rRNA where it nucleates assembly of the head domain of the 30S subunit. Is located at the subunit interface close to the decoding center. This is Small ribosomal subunit protein uS7 from Methanothermobacter thermautotrophicus (strain ATCC 29096 / DSM 1053 / JCM 10044 / NBRC 100330 / Delta H) (Methanobacterium thermoautotrophicum).